The chain runs to 394 residues: MAKAKFERTKPHVNIGTIGHVDHGKTSLTAAITIVLAKTGGAQATAYDQIDAAPEEKERGITISTAHVEYETKNRHYAHVDCPGHADYVKNMITGAAQMDGAILVVSAADGPMPQTREHILLAKQVGVPAMVVFLNKVDMVDDPDLLELVEMEVRELLSKYGFPGDEIPIIKGSALQALEGKPEGEEAINELMDAVDSYIPQPVELRINPFLMPIEDVFSISGRGTVVTGRVESGIIKVGDEIEIVGLKDTQKTTCTGVEMFRKLLDEGQAGDNVGILLRGTKREEVERGQVLAKPGSIKPHDKFEAEVYVLSKEEGGRHTPFTNDYRPQFYFRTTDVTGTIKLPADKQMVMPGDNATFTVELIKPIAMQEGLKFSIREGGRTVGAGVVTKINN.

The region spanning 10–204 (KPHVNIGTIG…AVDSYIPQPV (195 aa)) is the tr-type G domain. The segment at 19–26 (GHVDHGKT) is G1. GTP is bound at residue 19–26 (GHVDHGKT). Thr-26 contacts Mg(2+). The segment at 60-64 (GITIS) is G2. Positions 81 to 84 (DCPG) are G3. GTP-binding positions include 81–85 (DCPGH) and 136–139 (NKVD). Residues 136–139 (NKVD) are G4. Positions 174 to 176 (SAL) are G5.

The protein belongs to the TRAFAC class translation factor GTPase superfamily. Classic translation factor GTPase family. EF-Tu/EF-1A subfamily. As to quaternary structure, monomer.

It is found in the cytoplasm. The catalysed reaction is GTP + H2O = GDP + phosphate + H(+). In terms of biological role, GTP hydrolase that promotes the GTP-dependent binding of aminoacyl-tRNA to the A-site of ribosomes during protein biosynthesis. The polypeptide is Elongation factor Tu (Rickettsia rhipicephali).